The sequence spans 1736 residues: Collagen alpha-2(XI) chain (1736 aa).

The N-terminal stretch at 1–27 (MERCSRCHHLLLLVLLLLWLSAAPAWA) is a signal peptide. Residues 57–228 (DVAYRVSRPA…ESCDQKELEC (172 aa)) form the Laminin G-like domain. The tract at residues 215 to 486 (QAAYESCDQK…ILQQARVALR (272 aa)) is nonhelical region. 2 disordered regions span residues 229-465 (EGGW…DKGP) and 485-1539 (LRGP…SPGG). The span at 258–270 (PQNQEPQAQSTES) shows a compositional bias: polar residues. The segment covering 363–376 (ALSAETARSEAAAR) has biased composition (low complexity). Collagen-like domains lie at 399-447 (GPPG…GPPG), 487-545 (GPPG…ADGA), and 546-587 (RGMP…PPGE). Residues 400 to 413 (PPGPEGPAGFPGPP) show a composition bias toward pro residues. A triple-helical region region spans residues 487–1500 (GPPGPMGYTG…PGHPGPPGEV (1014 aa)). The span at 515–533 (DLGPQGPRGPQGLMGPPGK) shows a compositional bias: low complexity. Positions 615–624 (KGPPGIPGPP) are enriched in pro residues. Low complexity predominate over residues 650–663 (QQGTPGTQGLPGPQ). Basic and acidic residues predominate over residues 765-774 (RGEDGPEGPK). Over residues 842–861 (PTGPRGQRGPRGATGKSGAK) the composition is skewed to low complexity. Gly residues predominate over residues 994 to 1003 (GTAGGPGLKG). Residues 1029–1040 (IGPPGRPGPQGP) are compositionally biased toward pro residues. 2 consecutive Collagen-like domains span residues 1072 to 1127 (GPAG…ADGE) and 1128 to 1172 (PGAR…ETGD). Positions 1115–1133 (PVGQPGAAGADGEPGARGP) are enriched in low complexity. A compositionally biased stretch (pro residues) spans 1176–1187 (MGPPGPPGPRGP). Low complexity predominate over residues 1217 to 1230 (ESGSPGVQGEPGVK). 2 stretches are compositionally biased toward basic and acidic residues: residues 1232–1241 (PRGERGEKGE) and 1287–1296 (DGAKGDRGED). 2 stretches are compositionally biased toward low complexity: residues 1341–1364 (PGAV…KPGP) and 1376–1386 (QQGRPGATGQA). Pro residues predominate over residues 1388–1397 (PPGPVGPPGL). Low complexity predominate over residues 1413–1422 (PGLIGLIGPP). Residues 1444–1499 (GETGIPGASGPIGPGGPPGLPGPAGPKGAKGATGPAGPKGEKGVQGPPGHPGPPGE) form the Collagen-like 6 domain. The segment covering 1457–1467 (PGGPPGLPGPA) has biased composition (pro residues). Low complexity predominate over residues 1469-1481 (PKGAKGATGPAGP). The propeptide at 1501–1736 (IQPLPIQMPK…VLLGPVCFMG (236 aa)) is C-terminal propeptide. In terms of domain architecture, Fibrillar collagen NC1 spans 1541–1735 (EEIFGSLDSL…GVLLGPVCFM (195 aa)). Cysteines 1571 and 1603 form a disulfide. Positions 1589, 1591, 1592, 1594, and 1597 each coordinate Ca(2+). 2 N-linked (GlcNAc...) asparagine glycosylation sites follow: Asn-1604 and Asn-1650. Cystine bridges form between Cys-1612/Cys-1733 and Cys-1655/Cys-1689.

Belongs to the fibrillar collagen family. Trimers composed of three different chains: alpha 1(XI), alpha 2(XI), and alpha 3(XI). Alpha 3(XI) is a post-translational modification of alpha 1(II). Alpha 1(V) can also be found instead of alpha 3(XI)=1(II). Post-translationally, prolines at the third position of the tripeptide repeating unit (G-X-Y) are hydroxylated in some or all of the chains.

It localises to the secreted. The protein localises to the extracellular space. The protein resides in the extracellular matrix. Functionally, may play an important role in fibrillogenesis by controlling lateral growth of collagen II fibrils. The chain is Collagen alpha-2(XI) chain (COL11A2) from Bos taurus (Bovine).